We begin with the raw amino-acid sequence, 231 residues long: 7-cyano-7-deazaguanine synthase (231 aa).

Residue 8 to 18 participates in ATP binding; sequence FSGGQDSTTCL. Residues C188, C197, C200, and C203 each coordinate Zn(2+).

The protein belongs to the QueC family. Zn(2+) serves as cofactor.

It carries out the reaction 7-carboxy-7-deazaguanine + NH4(+) + ATP = 7-cyano-7-deazaguanine + ADP + phosphate + H2O + H(+). It participates in purine metabolism; 7-cyano-7-deazaguanine biosynthesis. Functionally, catalyzes the ATP-dependent conversion of 7-carboxy-7-deazaguanine (CDG) to 7-cyano-7-deazaguanine (preQ(0)). The sequence is that of 7-cyano-7-deazaguanine synthase from Cronobacter sakazakii (strain ATCC BAA-894) (Enterobacter sakazakii).